Reading from the N-terminus, the 93-residue chain is Cytochrome c (93 aa).

A compositionally biased stretch (low complexity) spans 1–13 (AALPPGDAAAAQG). Residues 1-21 (AALPPGDAAAAQGGSNGVGPN) are disordered. Methionine 70 lines the heme c pocket.

Belongs to the cytochrome c family. In terms of processing, binds 1 heme c group covalently per subunit.

The protein localises to the mitochondrion intermembrane space. Its function is as follows. Electron carrier protein. The oxidized form of the cytochrome c heme group can accept an electron from the heme group of the cytochrome c1 subunit of cytochrome reductase. Cytochrome c then transfers this electron to the cytochrome oxidase complex, the final protein carrier in the mitochondrial electron-transport chain. In Trypanosoma brucei brucei, this protein is Cytochrome c.